The primary structure comprises 341 residues: UDP-3-O-acylglucosamine N-acyltransferase (341 aa).

The Proton acceptor role is filled by His-240.

This sequence belongs to the transferase hexapeptide repeat family. LpxD subfamily. Homotrimer.

It catalyses the reaction a UDP-3-O-[(3R)-3-hydroxyacyl]-alpha-D-glucosamine + a (3R)-hydroxyacyl-[ACP] = a UDP-2-N,3-O-bis[(3R)-3-hydroxyacyl]-alpha-D-glucosamine + holo-[ACP] + H(+). Its pathway is bacterial outer membrane biogenesis; LPS lipid A biosynthesis. Its function is as follows. Catalyzes the N-acylation of UDP-3-O-acylglucosamine using 3-hydroxyacyl-ACP as the acyl donor. Is involved in the biosynthesis of lipid A, a phosphorylated glycolipid that anchors the lipopolysaccharide to the outer membrane of the cell. In Cellvibrio japonicus (strain Ueda107) (Pseudomonas fluorescens subsp. cellulosa), this protein is UDP-3-O-acylglucosamine N-acyltransferase.